Here is a 393-residue protein sequence, read N- to C-terminus: Phosphoglycerate kinase (393 aa).

Substrate is bound by residues aspartate 21 to asparagine 23, arginine 37, histidine 60 to arginine 63, arginine 119, and arginine 152. ATP contacts are provided by residues lysine 202, glutamate 323, and glycine 349–threonine 352.

This sequence belongs to the phosphoglycerate kinase family. Monomer.

Its subcellular location is the cytoplasm. It catalyses the reaction (2R)-3-phosphoglycerate + ATP = (2R)-3-phospho-glyceroyl phosphate + ADP. Its pathway is carbohydrate degradation; glycolysis; pyruvate from D-glyceraldehyde 3-phosphate: step 2/5. The polypeptide is Phosphoglycerate kinase (Desulforudis audaxviator (strain MP104C)).